A 299-amino-acid chain; its full sequence is Tyrosine recombinase XerD (299 aa).

One can recognise a Core-binding (CB) domain in the interval 3–88 (QQDNPLIEQF…AMRRLFQYLY (86 aa)). The region spanning 109–293 (RLPKDLSEAQ…ATERLRQLHQ (185 aa)) is the Tyr recombinase domain. Active-site residues include arginine 149, lysine 173, histidine 245, arginine 248, and histidine 271. Tyrosine 280 (O-(3'-phospho-DNA)-tyrosine intermediate) is an active-site residue.

This sequence belongs to the 'phage' integrase family. XerD subfamily. In terms of assembly, forms a cyclic heterotetrameric complex composed of two molecules of XerC and two molecules of XerD, in which XerC interacts with XerD via its C-terminal region, XerD interacts with XerC via its C-terminal region and so on.

It is found in the cytoplasm. FtsK may regulate the catalytic switch between XerC and XerD in the heterotetrameric complex during the two steps of the recombination process. Site-specific tyrosine recombinase, which acts by catalyzing the cutting and rejoining of the recombining DNA molecules. Binds cooperatively to specific DNA consensus sequences that are separated from XerC binding sites by a short central region, forming the heterotetrameric XerC-XerD complex that recombines DNA substrates. The complex is essential to convert dimers of the bacterial chromosome into monomers to permit their segregation at cell division. It also contributes to the segregational stability of plasmids. In the complex XerD specifically exchanges the bottom DNA strands. The sequence is that of Tyrosine recombinase XerD from Yersinia pestis.